The primary structure comprises 1124 residues: uncharacterized protein (1124 aa).

The signal sequence occupies residues 1–28; that stretch reads MALFPRSILIALVLSFVLNLGLVTKIHA. The next 7 helical transmembrane spans lie at 332-352, 359-379, 393-413, 495-515, 522-542, 555-575, and 700-720; these read IVTA…LLAG, EYIN…GINI, MIQW…SWVM, MLVS…AFMV, MISI…FLFA, MISF…MFAV, and IKNI…MYNF.

It belongs to the TrbL/VirB6 family.

It localises to the cell membrane. This is an uncharacterized protein from Rickettsia prowazekii (strain Madrid E).